The following is a 442-amino-acid chain: UDP-glucosyltransferase 29 (442 aa).

The active-site Proton acceptor is H20. H20 provides a ligand contact to an anthocyanidin. The Charge relay role is filled by D116. Positions 138, 318, 320, 335, 338, 340, 343, 359, and 360 each coordinate UDP-alpha-D-glucose.

It belongs to the UDP-glycosyltransferase family. Expressed at higher levels in roots than in leaves.

It catalyses the reaction (20S)-ginsenoside F2 + UDP-alpha-D-glucose = (20S)-ginsenoside Rd + UDP + H(+). The catalysed reaction is (20S)-ginsenoside Rh2 + UDP-alpha-D-glucose = (20S)-ginsenoside Rg3 + UDP + H(+). The protein operates within secondary metabolite biosynthesis; terpenoid biosynthesis. In terms of biological role, component of the dammarane-type triterpene saponins (e.g. PPD-type ginsenosides or panaxosides) biosynthetic pathway. Glycosyltransferase that catalyzes the conversion of ginsenoside Rh2 to ginsenoside Rg3. Triggers the biosynthesis of ginsenoside Rd from ginsenoside F2. This Panax ginseng (Korean ginseng) protein is UDP-glucosyltransferase 29.